We begin with the raw amino-acid sequence, 198 residues long: CASP-like protein 1U1 (198 aa).

Over Met1–Asn30 the chain is Cytoplasmic. The chain crosses the membrane as a helical span at residues Leu31–Ala51. At Thr52–Lys73 the chain is on the extracellular side. A helical membrane pass occupies residues Trp74–Cys94. Residues Cys95–Asp117 lie on the Cytoplasmic side of the membrane. A helical membrane pass occupies residues Phe118 to Ala138. Residues Arg139–Gln165 are Extracellular-facing. The helical transmembrane segment at Gly166–Ala186 threads the bilayer. Residues Ser187–His198 lie on the Cytoplasmic side of the membrane.

Belongs to the Casparian strip membrane proteins (CASP) family. Homodimer and heterodimers.

Its subcellular location is the cell membrane. In Physcomitrium patens (Spreading-leaved earth moss), this protein is CASP-like protein 1U1.